A 212-amino-acid polypeptide reads, in one-letter code: Large ribosomal subunit protein uL3 (212 aa).

Glutamine 153 carries the post-translational modification N5-methylglutamine.

The protein belongs to the universal ribosomal protein uL3 family. As to quaternary structure, part of the 50S ribosomal subunit. Forms a cluster with proteins L14 and L19. Post-translationally, methylated by PrmB.

Its function is as follows. One of the primary rRNA binding proteins, it binds directly near the 3'-end of the 23S rRNA, where it nucleates assembly of the 50S subunit. In Shewanella sediminis (strain HAW-EB3), this protein is Large ribosomal subunit protein uL3.